A 164-amino-acid chain; its full sequence is UPF0114 protein YqhA (164 aa).

3 helical membrane passes run 15–35 (LLAP…LKFF), 53–73 (LILV…LVMV), and 136–156 (LMWY…MGYL).

This sequence belongs to the UPF0114 family.

Its subcellular location is the cell membrane. The polypeptide is UPF0114 protein YqhA (Salmonella dublin (strain CT_02021853)).